A 191-amino-acid polypeptide reads, in one-letter code: Ribosomal RNA small subunit methyltransferase G (191 aa).

Residues G62, L67, 111–112 (IE), and R124 contribute to the S-adenosyl-L-methionine site.

This sequence belongs to the methyltransferase superfamily. RNA methyltransferase RsmG family.

The protein resides in the cytoplasm. It catalyses the reaction guanosine(527) in 16S rRNA + S-adenosyl-L-methionine = N(7)-methylguanosine(527) in 16S rRNA + S-adenosyl-L-homocysteine. In terms of biological role, specifically methylates the N7 position of guanine in position 527 of 16S rRNA. The chain is Ribosomal RNA small subunit methyltransferase G from Rickettsia rickettsii (strain Sheila Smith).